The sequence spans 313 residues: Protoheme IX farnesyltransferase (313 aa).

9 consecutive transmembrane segments (helical) span residues 29–49 (VISL…RGWP), 57–77 (LWLL…AGVF), 101–123 (LISS…VMLW), 124–144 (VWGT…YVVI), 157–177 (IVIG…AVTG), 185–205 (YLFA…ALMI), 225–245 (MTVA…LMPV), 247–267 (FGAV…WLLW), and 287–307 (AVPL…AGAI).

Belongs to the UbiA prenyltransferase family. Protoheme IX farnesyltransferase subfamily.

It localises to the cell membrane. The enzyme catalyses heme b + (2E,6E)-farnesyl diphosphate + H2O = Fe(II)-heme o + diphosphate. Its pathway is porphyrin-containing compound metabolism; heme O biosynthesis; heme O from protoheme: step 1/1. Functionally, converts heme B (protoheme IX) to heme O by substitution of the vinyl group on carbon 2 of heme B porphyrin ring with a hydroxyethyl farnesyl side group. The protein is Protoheme IX farnesyltransferase of Deinococcus radiodurans (strain ATCC 13939 / DSM 20539 / JCM 16871 / CCUG 27074 / LMG 4051 / NBRC 15346 / NCIMB 9279 / VKM B-1422 / R1).